The chain runs to 175 residues: Shikimate kinase (175 aa).

G14 to T19 lines the ATP pocket. S18 contacts Mg(2+). D36, R60, and G82 together coordinate substrate. R120 contributes to the ATP binding site. Residue R140 participates in substrate binding. Q157 contacts ATP.

Belongs to the shikimate kinase family. In terms of assembly, monomer. Mg(2+) serves as cofactor.

The protein localises to the cytoplasm. The catalysed reaction is shikimate + ATP = 3-phosphoshikimate + ADP + H(+). Its pathway is metabolic intermediate biosynthesis; chorismate biosynthesis; chorismate from D-erythrose 4-phosphate and phosphoenolpyruvate: step 5/7. Its function is as follows. Catalyzes the specific phosphorylation of the 3-hydroxyl group of shikimic acid using ATP as a cosubstrate. The polypeptide is Shikimate kinase (Mannheimia succiniciproducens (strain KCTC 0769BP / MBEL55E)).